The sequence spans 300 residues: tRNA pseudouridine synthase B (300 aa).

Aspartate 44 serves as the catalytic Nucleophile.

It belongs to the pseudouridine synthase TruB family. Type 1 subfamily.

The enzyme catalyses uridine(55) in tRNA = pseudouridine(55) in tRNA. Responsible for synthesis of pseudouridine from uracil-55 in the psi GC loop of transfer RNAs. The protein is tRNA pseudouridine synthase B of Corynebacterium diphtheriae (strain ATCC 700971 / NCTC 13129 / Biotype gravis).